The chain runs to 493 residues: Dipeptide permease D (493 aa).

The Cytoplasmic portion of the chain corresponds to 1 to 13 (MNKHASQPRAIYY). Residues 14–34 (VVALQIWEYFSFYGMRALLIL) form a helical membrane-spanning segment. Over 35–48 (YLTNQLKYNDTHAY) the chain is Periplasmic. The helical transmembrane segment at 49 to 69 (ELFSAYCSLVYVTPILGGFLA) threads the bilayer. Over 70–77 (DKVLGNRM) the chain is Cytoplasmic. Residues 78 to 98 (AVMLGALLMAIGHVVLGASEI) traverse the membrane as a helical segment. Residues 99–100 (HP) lie on the Periplasmic side of the membrane. The chain crosses the membrane as a helical span at residues 101–121 (SFLYLSLAIIVCGYGLFKSNV). At 122–137 (SCLLGELYEPTDPRRD) the chain is on the cytoplasmic side. A helical membrane pass occupies residues 138–158 (GGFSLMYAAGNVGSIIAPIAC). Residues 159 to 166 (GYAQEEYS) lie on the Periplasmic side of the membrane. The helical transmembrane segment at 167-187 (WAMGFGLAAVGMIAGLVIFLC) threads the bilayer. Residues 188 to 211 (GNRHFTHTRGVNKKVLRATNFLLP) are Cytoplasmic-facing. The chain crosses the membrane as a helical span at residues 212 to 232 (NWGWLLVLLVATPALITILFW). The Periplasmic portion of the chain corresponds to 233–234 (KE). A helical transmembrane segment spans residues 235–255 (WSVYALIVATIIGLGVLAKIY). At 256–266 (RKAENQKQRKE) the chain is on the cytoplasmic side. Residues 267–287 (LGLIVTLTFFSMLFWAFAQQG) form a helical membrane-spanning segment. The Periplasmic portion of the chain corresponds to 288-311 (GSSISLYIDRFVNRDMFGYTVPTA). Residues 312–332 (MFQSINAFAVMLCGVFLAWVV) traverse the membrane as a helical segment. The Cytoplasmic segment spans residues 333–343 (KESVAGNRTVR). A helical membrane pass occupies residues 344 to 364 (IWGKFALGLGLMSAGFCILTL). The Periplasmic portion of the chain corresponds to 365–378 (SARWSAMYGHSSLP). A helical membrane pass occupies residues 379–399 (LMVLGLAVMGFAELFIDPVAM). Topologically, residues 400 to 412 (SQITRIEIPGVTG) are cytoplasmic. A helical membrane pass occupies residues 413–433 (VLTGIYMLLSGAIANYLAGVI). Residues 434–461 (ADQTSQASFDASGAINYSINAYIEVFDQ) are Periplasmic-facing. A helical membrane pass occupies residues 462–482 (ITWGALACVGLVLMIWLYQAL). At 483–493 (KFRNRALALES) the chain is on the cytoplasmic side.

The protein belongs to the major facilitator superfamily. Proton-dependent oligopeptide transporter (POT/PTR) (TC 2.A.17) family. DtpD subfamily.

The protein resides in the cell inner membrane. Probable proton-dependent permease that transports dipeptides. The sequence is that of Dipeptide permease D (dtpD) from Escherichia coli (strain K12).